We begin with the raw amino-acid sequence, 187 residues long: Elongation factor P (187 aa).

The protein belongs to the elongation factor P family.

It localises to the cytoplasm. It functions in the pathway protein biosynthesis; polypeptide chain elongation. Functionally, involved in peptide bond synthesis. Stimulates efficient translation and peptide-bond synthesis on native or reconstituted 70S ribosomes in vitro. Probably functions indirectly by altering the affinity of the ribosome for aminoacyl-tRNA, thus increasing their reactivity as acceptors for peptidyl transferase. This chain is Elongation factor P, found in Helicobacter acinonychis (strain Sheeba).